The chain runs to 1590 residues: von Willebrand factor D and EGF domain-containing protein (1590 aa).

The N-terminal stretch at 1–20 is a signal peptide; the sequence is MPGGACVLVIALMFLAWGEA. N-linked (GlcNAc...) asparagine glycosylation occurs at N367. A VWFD domain is found at 423–606; sequence AYCYTFTDPH…EWRILPGKSM (184 aa). Intrachain disulfides connect C425–C565 and C468–C477. Residues N703 and N968 are each glycosylated (N-linked (GlcNAc...) asparagine). In terms of domain architecture, EGF-like 1 spans 1177 to 1216; the sequence is TVKSCDCLNGGSCVSDRNFSPGSGVYLCVCLPGFHGSLCE. 3 disulfides stabilise this stretch: C1181–C1189, C1183–C1204, and C1206–C1215. A compositionally biased stretch (basic and acidic residues) spans 1268-1280; it reads DKSVNKEEDDKNA. The disordered stretch occupies residues 1268-1288; the sequence is DKSVNKEEDDKNAQGRKRHVK. EGF-like domains are found at residues 1294–1326, 1358–1390, 1422–1454, 1455–1486, 1518–1550, and 1551–1582; these read AFTI…SNCQ, DEEH…PRCE, STAL…EHCQ, NAFC…RRFQ, NTPI…VRCQ, and IPIC…VKCE. 17 disulfide bridges follow: C1298/C1308, C1302/C1314, C1316/C1325, C1362/C1372, C1366/C1378, C1380/C1389, C1426/C1436, C1430/C1442, C1444/C1453, C1458/C1468, C1462/C1474, C1522/C1532, C1526/C1538, C1540/C1549, C1554/C1564, C1558/C1570, and C1572/C1581.

Its subcellular location is the secreted. The polypeptide is von Willebrand factor D and EGF domain-containing protein (VWDE) (Homo sapiens (Human)).